The sequence spans 173 residues: Protein GrpE (173 aa).

Over residues 1–28 (MTEEEKTKSEAEEIEQNNKEEEQEKSVE) the composition is skewed to basic and acidic residues. A disordered region spans residues 1–30 (MTEEEKTKSEAEEIEQNNKEEEQEKSVEEL).

This sequence belongs to the GrpE family. As to quaternary structure, homodimer.

It localises to the cytoplasm. In terms of biological role, participates actively in the response to hyperosmotic and heat shock by preventing the aggregation of stress-denatured proteins, in association with DnaK and GrpE. It is the nucleotide exchange factor for DnaK and may function as a thermosensor. Unfolded proteins bind initially to DnaJ; upon interaction with the DnaJ-bound protein, DnaK hydrolyzes its bound ATP, resulting in the formation of a stable complex. GrpE releases ADP from DnaK; ATP binding to DnaK triggers the release of the substrate protein, thus completing the reaction cycle. Several rounds of ATP-dependent interactions between DnaJ, DnaK and GrpE are required for fully efficient folding. The protein is Protein GrpE of Methanosphaera stadtmanae (strain ATCC 43021 / DSM 3091 / JCM 11832 / MCB-3).